The following is a 204-amino-acid chain: ATP phosphoribosyltransferase (204 aa).

It belongs to the ATP phosphoribosyltransferase family. Short subfamily. As to quaternary structure, heteromultimer composed of HisG and HisZ subunits.

It localises to the cytoplasm. It catalyses the reaction 1-(5-phospho-beta-D-ribosyl)-ATP + diphosphate = 5-phospho-alpha-D-ribose 1-diphosphate + ATP. Its pathway is amino-acid biosynthesis; L-histidine biosynthesis; L-histidine from 5-phospho-alpha-D-ribose 1-diphosphate: step 1/9. Functionally, catalyzes the condensation of ATP and 5-phosphoribose 1-diphosphate to form N'-(5'-phosphoribosyl)-ATP (PR-ATP). Has a crucial role in the pathway because the rate of histidine biosynthesis seems to be controlled primarily by regulation of HisG enzymatic activity. The sequence is that of ATP phosphoribosyltransferase from Staphylococcus aureus (strain MRSA252).